Consider the following 725-residue polypeptide: G-quartet DNA-binding protein TGP1 (725 aa).

Positions 241–258 (KKALTDVLQIHEKKERVH) match the Nuclear localization signal motif. Disordered regions lie at residues 252–284 (EKKERVHKQQNKNKNPRNAHKNHNRQRPNLQET) and 468–614 (EIHK…GKRG). Residues 256 to 277 (RVHKQQNKNKNPRNAHKNHNRQ) are compositionally biased toward basic residues. Over residues 468–478 (EIHKIDRERKR) the composition is skewed to basic and acidic residues. The span at 517–544 (NKYKNTSVQNNNNNKNQQRSQSQNQRPP) shows a compositional bias: low complexity. The span at 545 to 564 (RNYDNRQGGENRNNRQRNEN) shows a compositional bias: basic and acidic residues. The span at 565-593 (NRNNFNGNGHRVNNQNNQRNRNSSYPRNN) shows a compositional bias: low complexity.

The N-terminus is blocked.

The protein resides in the nucleus. Its function is as follows. Binds specifically to parallel G4-DNA, a four-stranded structure stabilized by tetrads of hydrogen-bonded guanines. The sequence is that of G-quartet DNA-binding protein TGP1 (TGP1) from Tetrahymena thermophila.